Consider the following 100-residue polypeptide: Small ribosomal subunit protein uS14c (100 aa).

It belongs to the universal ribosomal protein uS14 family. As to quaternary structure, part of the 30S ribosomal subunit.

The protein localises to the plastid. The protein resides in the chloroplast. In terms of biological role, binds 16S rRNA, required for the assembly of 30S particles. The polypeptide is Small ribosomal subunit protein uS14c (Cucumis sativus (Cucumber)).